A 446-amino-acid chain; its full sequence is Ribosomal protein uS12 methylthiotransferase RimO (446 aa).

An MTTase N-terminal domain is found at 4–119 (LKVGLISLGC…LVENINNFIS (116 aa)). Positions 13, 48, 82, 157, 161, and 164 each coordinate [4Fe-4S] cluster. The region spanning 143–373 (TTKSHTAYLR…MMLQKHIIYS (231 aa)) is the Radical SAM core domain. Positions 376–442 (KYKIGNKYKV…EYDLVGVVYD (67 aa)) constitute a TRAM domain.

It belongs to the methylthiotransferase family. RimO subfamily. [4Fe-4S] cluster is required as a cofactor.

It localises to the cytoplasm. It carries out the reaction L-aspartate(89)-[ribosomal protein uS12]-hydrogen + (sulfur carrier)-SH + AH2 + 2 S-adenosyl-L-methionine = 3-methylsulfanyl-L-aspartate(89)-[ribosomal protein uS12]-hydrogen + (sulfur carrier)-H + 5'-deoxyadenosine + L-methionine + A + S-adenosyl-L-homocysteine + 2 H(+). Catalyzes the methylthiolation of an aspartic acid residue of ribosomal protein uS12. The polypeptide is Ribosomal protein uS12 methylthiotransferase RimO (Clostridium kluyveri (strain ATCC 8527 / DSM 555 / NBRC 12016 / NCIMB 10680 / K1)).